The following is a 165-amino-acid chain: Immunity protein YokJ (165 aa).

Probably interacts with cognate toxin YokI but not with other non-cognate toxins. The interaction inhibits the toxic activity of YokI.

The protein resides in the cytoplasm. In terms of biological role, immunity component of one of 6 LXG toxin-immunity modules in this strain. They promote kin selection, mediate competition in biofilms, and drive spatial segregation of different strains, indicating that LXG toxins may help avoid warfare between strains in biofilms. Mediates intercellular competition during biofilm formation; disruption of the operon disadvantages the bacteria, but overexpression of the cognate immunity protein restores growth in competition with wild-type. In situ neutralizes the toxic effect of cognate toxin YokI. Neutralizes the ability to inhibit growth of cognate toxin YokI upon expression in E.coli. Does not have immunity protein activity on other LXG toxins. This is Immunity protein YokJ (yokJ) from Bacillus subtilis (strain 168).